Reading from the N-terminus, the 561-residue chain is uncharacterized protein (561 aa).

Disordered stretches follow at residues 369–390 (SVPENGKPNMGRIPSAPSLSKG) and 429–515 (EGLG…GESE). A Phosphoserine modification is found at Ser383. Residues 465-503 (NISPESSRFGTPSDPNSSSQSLGNEVLSRPNSNSNSAES) are compositionally biased toward polar residues.

This is an uncharacterized protein from Schizosaccharomyces pombe (strain 972 / ATCC 24843) (Fission yeast).